Reading from the N-terminus, the 229-residue chain is 2-C-methyl-D-erythritol 4-phosphate cytidylyltransferase (229 aa).

The protein belongs to the IspD/TarI cytidylyltransferase family. IspD subfamily.

The catalysed reaction is 2-C-methyl-D-erythritol 4-phosphate + CTP + H(+) = 4-CDP-2-C-methyl-D-erythritol + diphosphate. The protein operates within isoprenoid biosynthesis; isopentenyl diphosphate biosynthesis via DXP pathway; isopentenyl diphosphate from 1-deoxy-D-xylulose 5-phosphate: step 2/6. In terms of biological role, catalyzes the formation of 4-diphosphocytidyl-2-C-methyl-D-erythritol from CTP and 2-C-methyl-D-erythritol 4-phosphate (MEP). In Shouchella clausii (strain KSM-K16) (Alkalihalobacillus clausii), this protein is 2-C-methyl-D-erythritol 4-phosphate cytidylyltransferase.